Consider the following 272-residue polypeptide: Shikimate dehydrogenase (NADP(+)) (272 aa).

Shikimate-binding positions include 14–16 and Thr-61; that span reads SKS. Lys-65 acts as the Proton acceptor in catalysis. Glu-77 provides a ligand contact to NADP(+). Residues Asn-86 and Asp-102 each contribute to the shikimate site. Residues 126–130, 149–154, and Met-213 contribute to the NADP(+) site; these read GAGGA and NRTQEK. Tyr-215 is a binding site for shikimate. An NADP(+)-binding site is contributed by Gly-237.

It belongs to the shikimate dehydrogenase family. Homodimer.

The catalysed reaction is shikimate + NADP(+) = 3-dehydroshikimate + NADPH + H(+). Its pathway is metabolic intermediate biosynthesis; chorismate biosynthesis; chorismate from D-erythrose 4-phosphate and phosphoenolpyruvate: step 4/7. Functionally, involved in the biosynthesis of the chorismate, which leads to the biosynthesis of aromatic amino acids. Catalyzes the reversible NADPH linked reduction of 3-dehydroshikimate (DHSA) to yield shikimate (SA). This Erwinia tasmaniensis (strain DSM 17950 / CFBP 7177 / CIP 109463 / NCPPB 4357 / Et1/99) protein is Shikimate dehydrogenase (NADP(+)).